Consider the following 209-residue polypeptide: PRA1 family protein B1 (209 aa).

Ala-2 carries the N-acetylalanine modification. Transmembrane regions (helical) follow at residues 73-93, 95-115, 133-153, 154-174, and 185-205; these read LAYF…FSLF, HPLS…LYLF, ETLL…SVGS, LLTS…AFVV, and PANA…AAAV.

The protein belongs to the PRA1 family. Can form homodimer. Interacts with PRA1B2, PRA1B3, PRA1B4, PRA1B5, PRA1B6 and PRA1E.

It is found in the endosome membrane. May be involved in both secretory and endocytic intracellular trafficking in the endosomal/prevacuolar compartments. This Arabidopsis thaliana (Mouse-ear cress) protein is PRA1 family protein B1 (PRA1B1).